The following is a 392-amino-acid chain: Anhydro-N-acetylmuramic acid kinase (392 aa).

19–26 (GTSVDGID) is an ATP binding site.

It belongs to the anhydro-N-acetylmuramic acid kinase family.

It carries out the reaction 1,6-anhydro-N-acetyl-beta-muramate + ATP + H2O = N-acetyl-D-muramate 6-phosphate + ADP + H(+). Its pathway is amino-sugar metabolism; 1,6-anhydro-N-acetylmuramate degradation. The protein operates within cell wall biogenesis; peptidoglycan recycling. Functionally, catalyzes the specific phosphorylation of 1,6-anhydro-N-acetylmuramic acid (anhMurNAc) with the simultaneous cleavage of the 1,6-anhydro ring, generating MurNAc-6-P. Is required for the utilization of anhMurNAc either imported from the medium or derived from its own cell wall murein, and thus plays a role in cell wall recycling. This chain is Anhydro-N-acetylmuramic acid kinase, found in Trichormus variabilis (strain ATCC 29413 / PCC 7937) (Anabaena variabilis).